Reading from the N-terminus, the 115-residue chain is uncharacterized protein (115 aa).

3 helical membrane passes run 7–27 (TLIF…IWFD), 40–60 (YALT…LLAA), and 72–92 (IVLV…YFYL).

Its subcellular location is the cell membrane. This is an uncharacterized protein from Haemophilus influenzae (strain ATCC 51907 / DSM 11121 / KW20 / Rd).